We begin with the raw amino-acid sequence, 469 residues long: UDP-N-acetylmuramate--L-alanine ligase (469 aa).

Residue 119–125 participates in ATP binding; that stretch reads GTHGKTT.

The protein belongs to the MurCDEF family.

Its subcellular location is the cytoplasm. It catalyses the reaction UDP-N-acetyl-alpha-D-muramate + L-alanine + ATP = UDP-N-acetyl-alpha-D-muramoyl-L-alanine + ADP + phosphate + H(+). The protein operates within cell wall biogenesis; peptidoglycan biosynthesis. Its function is as follows. Cell wall formation. In Vesicomyosocius okutanii subsp. Calyptogena okutanii (strain HA), this protein is UDP-N-acetylmuramate--L-alanine ligase.